A 486-amino-acid polypeptide reads, in one-letter code: Malonate-semialdehyde dehydrogenase 1 (486 aa).

Residues phenylalanine 154, lysine 178, glutamate 181, arginine 182, and serine 231 each contribute to the NAD(+) site. The active-site Nucleophile is cysteine 286. Position 386 (glutamate 386) interacts with NAD(+).

This sequence belongs to the aldehyde dehydrogenase family. IolA subfamily. As to quaternary structure, homotetramer.

The catalysed reaction is 3-oxopropanoate + NAD(+) + CoA + H2O = hydrogencarbonate + acetyl-CoA + NADH + H(+). It catalyses the reaction 2-methyl-3-oxopropanoate + NAD(+) + CoA + H2O = propanoyl-CoA + hydrogencarbonate + NADH + H(+). It functions in the pathway polyol metabolism; myo-inositol degradation into acetyl-CoA; acetyl-CoA from myo-inositol: step 7/7. Functionally, catalyzes the oxidation of malonate semialdehyde (MSA) and methylmalonate semialdehyde (MMSA) into acetyl-CoA and propanoyl-CoA, respectively. Is involved in a myo-inositol catabolic pathway. Bicarbonate, and not CO2, is the end-product of the enzymatic reaction. In Oceanobacillus iheyensis (strain DSM 14371 / CIP 107618 / JCM 11309 / KCTC 3954 / HTE831), this protein is Malonate-semialdehyde dehydrogenase 1.